Here is a 206-residue protein sequence, read N- to C-terminus: MLSAQLEAYLAEINLPATAEQKKQLIDFVGMLNKWNKAYNLTSVRDPEAMLIRHIMDSLVVSKHLQGERFIDVGTGPGLPGIPLAIMNPDKQFVLLDSLGKRIRFQKQVSFELGIHNISSVESRVEAYQPEQKFDGVLSRAFASIQDMLTWCHHLPAEHGQFYALKGQLNDEEMQHIPSGFAVKEVIELKVPKLDEQRHLLKIIKE.

S-adenosyl-L-methionine is bound by residues glycine 74, leucine 79, 125 to 126 (VE), and arginine 140.

This sequence belongs to the methyltransferase superfamily. RNA methyltransferase RsmG family.

It localises to the cytoplasm. It catalyses the reaction guanosine(527) in 16S rRNA + S-adenosyl-L-methionine = N(7)-methylguanosine(527) in 16S rRNA + S-adenosyl-L-homocysteine. In terms of biological role, specifically methylates the N7 position of guanine in position 527 of 16S rRNA. This Shewanella baltica (strain OS223) protein is Ribosomal RNA small subunit methyltransferase G.